We begin with the raw amino-acid sequence, 404 residues long: Formate-dependent phosphoribosylglycinamide formyltransferase (404 aa).

N(1)-(5-phospho-beta-D-ribosyl)glycinamide contacts are provided by residues 25 to 26 (EL) and Glu85. ATP is bound by residues Arg118, Lys159, 164 to 169 (SSGKGQ), 199 to 202 (EGFI), and Glu207. The region spanning 123 to 318 (RLAAEELGLP…EFELHARAIL (196 aa)) is the ATP-grasp domain. Mg(2+) contacts are provided by Glu277 and Glu289. Residues Asp296, Lys365, and 372 to 373 (RR) each bind N(1)-(5-phospho-beta-D-ribosyl)glycinamide. Positions 384–404 (TDEARSRAKQAAAAVRPVSAK) are disordered. Over residues 392-404 (KQAAAAVRPVSAK) the composition is skewed to low complexity.

Belongs to the PurK/PurT family. As to quaternary structure, homodimer.

It catalyses the reaction N(1)-(5-phospho-beta-D-ribosyl)glycinamide + formate + ATP = N(2)-formyl-N(1)-(5-phospho-beta-D-ribosyl)glycinamide + ADP + phosphate + H(+). Its pathway is purine metabolism; IMP biosynthesis via de novo pathway; N(2)-formyl-N(1)-(5-phospho-D-ribosyl)glycinamide from N(1)-(5-phospho-D-ribosyl)glycinamide (formate route): step 1/1. Its function is as follows. Involved in the de novo purine biosynthesis. Catalyzes the transfer of formate to 5-phospho-ribosyl-glycinamide (GAR), producing 5-phospho-ribosyl-N-formylglycinamide (FGAR). Formate is provided by PurU via hydrolysis of 10-formyl-tetrahydrofolate. This Paraburkholderia xenovorans (strain LB400) protein is Formate-dependent phosphoribosylglycinamide formyltransferase.